The following is a 644-amino-acid chain: MQTVRMTTAQALVKFLNQQYVEFDGKQQKFVKGIFTIFGHGNVVGLGQALEEDAGELEVYQGRNEQGMANAAMAFAKQKHRKQIMACTSSVGPGSANMITSAATASANNIPVLLLPGDVFATRQPDPVLQQIEQTHDLSISTNDAFRAVSKYWDRINRPEQLMTAMIQAMRVLTNPADTGAVTICLPQDVQGEAWDFPSYFFQKRVHRIERRLPTKASLADAVEMIKRKKKPVMICGGGVRYAEAAEELKQFAETFHIPFGETQAGKSAIESSHPYNLGGIGVTGNVAANTIAKEADLVIGIGTRFTDFTTASKQLFQNEEVEFLNINISEFHANKLDALKVIADAKEALLALIDELQEIDYQSSYTVEIADAKDAWETELSRLHNIRFTCQDFTPEVEGHFNENLNEYVDALGTQLTQTAVIGQINTLLDKDAIIVGAAGSLPGDLQRMWASRKPNTYHMEYGYSCMGYEVAGALGAKLAEPSKEVYAMVGDGSYQMLHSELVTSLQENKKINVLLFDNSGFGCINNLQMGNGMGSFGTEFRYRNQETRKLDGAIMKIDFAASAAGYGVKTYHVTSLEQLQEALIDAKKQTVSTLIDIKVLPKTMTNGYESWWHVGVAEVSKNQSVQAAYESKVSNLQQARSY.

Glu-65 is a binding site for thiamine diphosphate. Residues 442–522 (SLPGDLQRMW…INVLLFDNSG (81 aa)) are thiamine pyrophosphate binding. Positions 493 and 520 each coordinate Mg(2+).

The protein belongs to the TPP enzyme family. Requires Mg(2+) as cofactor. Thiamine diphosphate is required as a cofactor.

The enzyme catalyses 3D-3,5/4-trihydroxycyclohexane-1,2-dione + H2O = 5-deoxy-D-glucuronate + H(+). Its pathway is polyol metabolism; myo-inositol degradation into acetyl-CoA; acetyl-CoA from myo-inositol: step 3/7. Involved in the cleavage of the C1-C2 bond of 3D-(3,5/4)-trihydroxycyclohexane-1,2-dione (THcHDO) to yield 5-deoxy-glucuronate (5DG). The sequence is that of 3D-(3,5/4)-trihydroxycyclohexane-1,2-dione hydrolase from Bacillus anthracis (strain A0248).